Reading from the N-terminus, the 489-residue chain is DNA-directed RNA polymerase subunit beta' C-terminal section (489 aa).

3 residues coordinate Mg(2+): Asp208, Asp210, and Asp212.

This sequence belongs to the RNA polymerase beta' chain family. RpoC1 subfamily. In terms of assembly, in plastids the minimal PEP RNA polymerase catalytic core is composed of four subunits: alpha, beta, beta', and beta''. When a (nuclear-encoded) sigma factor is associated with the core the holoenzyme is formed, which can initiate transcription. It depends on Mg(2+) as a cofactor.

It localises to the plastid. The protein resides in the chloroplast. The catalysed reaction is RNA(n) + a ribonucleoside 5'-triphosphate = RNA(n+1) + diphosphate. Its function is as follows. DNA-dependent RNA polymerase catalyzes the transcription of DNA into RNA using the four ribonucleoside triphosphates as substrates. The polypeptide is DNA-directed RNA polymerase subunit beta' C-terminal section (rpoC1B) (Chlamydomonas reinhardtii (Chlamydomonas smithii)).